Here is a 451-residue protein sequence, read N- to C-terminus: MEKLIAHLKSQGFIFQGSEIYGGLANSWDYGPLGVEVKNKLKQAWWNHFVRKNPYNIGLDSSIILNSSVWKASGHIDGFNDPLIDCKKCNSRWRADKLIEEFNSEINAGVMTENQMEEFIREQNIKCPKCQACDFTQIRKFALMFKTNQGVLEDESSSVYLRPETAQGIFINFKNAQRSLRKKLPFGIGQIGKSFRNEITPGNFIFRTREFEQMELEFFFNPSDEKDWFSYWLNEVETFLQDKIQINKENYRVRSHEKDELAHYSTATSDIEFKFPFGWGELWGVAHRGNFDLNAHQEASKQDLTYLDPTTNQKVLPHVIEPSVGVERMMLAILWQAYHEEDLGEGNSRIVMKLPYNLAPYQIAVMPLQKQQNDQAQALYSNLLNNFDVTYDETGNVGKRYRRQDAIGTPFVITVDFDTPETNSVTVRERDSMEQVRINLDELEAYLKAKF.

Residues Arg-94 and Glu-164 each contribute to the substrate site. ATP-binding positions include 196–198 (RNE), 206–211 (FRTREF), 281–282 (EL), and 325–328 (GVER). 211–215 (FEQME) provides a ligand contact to substrate. 321 to 325 (EPSVG) serves as a coordination point for substrate.

Belongs to the class-II aminoacyl-tRNA synthetase family. As to quaternary structure, homodimer.

It is found in the cytoplasm. The catalysed reaction is tRNA(Gly) + glycine + ATP = glycyl-tRNA(Gly) + AMP + diphosphate. In terms of biological role, catalyzes the attachment of glycine to tRNA(Gly). In Mesoplasma florum (strain ATCC 33453 / NBRC 100688 / NCTC 11704 / L1) (Acholeplasma florum), this protein is Glycine--tRNA ligase.